Reading from the N-terminus, the 652-residue chain is Starch synthase 1, chloroplastic/amyloplastic (652 aa).

The N-terminal 49 residues, 1–49 (MASLQISGSVKFEPFVGFNRIRHFRPIASLGFPRFRRRFSIGRSLLLRR), are a transit peptide targeting the chloroplast. Residue Lys156 coordinates ADP-alpha-D-glucose.

It belongs to the glycosyltransferase 1 family. Bacterial/plant glycogen synthase subfamily. In terms of tissue distribution, expressed in roots, leaves, stems, buds and flowers.

The protein localises to the plastid. Its subcellular location is the chloroplast. It is found in the amyloplast. It carries out the reaction [(1-&gt;4)-alpha-D-glucosyl](n) + ADP-alpha-D-glucose = [(1-&gt;4)-alpha-D-glucosyl](n+1) + ADP + H(+). The protein operates within glycan biosynthesis; starch biosynthesis. Its function is as follows. Involved in the synthesis of short glycan chains within amylopectin in leaves. Is required to generate chains up to about a degree of polymerization of 10 (DP10). This Arabidopsis thaliana (Mouse-ear cress) protein is Starch synthase 1, chloroplastic/amyloplastic (SS1).